The chain runs to 257 residues: Meiotically up-regulated gene 14 protein (257 aa).

It is found in the cytoplasm. It localises to the nucleus. In terms of biological role, has a role in meiosis. This is Meiotically up-regulated gene 14 protein (mug14) from Schizosaccharomyces pombe (strain 972 / ATCC 24843) (Fission yeast).